Consider the following 193-residue polypeptide: Interleukin-18 (193 aa).

The propeptide occupies 1-36 (MAAEQVEDNCISFVEMKFINNTLYFVAENDEDLESD).

The protein belongs to the IL-1 family. In terms of assembly, forms a ternary complex with ligand-binding receptor subunit IL18R1 and signaling receptor subunit IL18RAP at the plasma membrane. Mature IL18 first binds to IL18R1 forming a low affinity binary complex, which then interacts with IL18RAP to form a high affinity ternary complex that signals inside the cell. Interacts with cargo receptor TMED10; the interaction mediates the translocation from the cytoplasm into the ERGIC (endoplasmic reticulum-Golgi intermediate compartment) and thereby secretion. Post-translationally, the pro-IL-18 precursor is processed by CASP1, CASP4 or CASP5 to yield its mature, active form. The pro-IL-18 precursor features autoinhibitory interactions between the propeptide and the post-cleavage-site region, preventing recognition by the IL18R1 receptor. Processing by CASP1, CASP4 or CASP5 induces conformational changes to generate critical receptor-binding sites. The mature form is then secreted and released in the extracellular milieu by passing through the gasdermin-D (GSDMD) pore. In contrast, cleavage by CASP3 inactivates IL18.

Its subcellular location is the cytoplasm. The protein resides in the cytosol. It is found in the secreted. Pro-inflammatory cytokine primarily involved in epithelial barrier repair, polarized T-helper 1 (Th1) cell and natural killer (NK) cell immune responses. Upon binding to IL18R1 and IL18RAP, forms a signaling ternary complex which activates NF-kappa-B, triggering synthesis of inflammatory mediators. Synergizes with IL12/interleukin-12 to induce IFNG synthesis from T-helper 1 (Th1) cells and natural killer (NK) cells. Involved in transduction of inflammation downstream of pyroptosis: its mature form is specifically released in the extracellular milieu by passing through the gasdermin-D (GSDMD) pore. The sequence is that of Interleukin-18 (IL18) from Boselaphus tragocamelus (Nilgai).